The chain runs to 545 residues: Phenylalanine--tRNA ligase beta subunit (545 aa).

In terms of domain architecture, B5 spans F268–P343. Mg(2+) contacts are provided by D321, D327, E330, and D331.

This sequence belongs to the phenylalanyl-tRNA synthetase beta subunit family. Type 2 subfamily. As to quaternary structure, tetramer of two alpha and two beta subunits. The cofactor is Mg(2+).

It is found in the cytoplasm. The catalysed reaction is tRNA(Phe) + L-phenylalanine + ATP = L-phenylalanyl-tRNA(Phe) + AMP + diphosphate + H(+). This is Phenylalanine--tRNA ligase beta subunit from Saccharolobus islandicus (strain M.16.27) (Sulfolobus islandicus).